Reading from the N-terminus, the 461-residue chain is UPF0210 protein Ddes_0622 (461 aa).

It belongs to the UPF0210 family. Homodimer.

The polypeptide is UPF0210 protein Ddes_0622 (Desulfovibrio desulfuricans (strain ATCC 27774 / DSM 6949 / MB)).